A 271-amino-acid polypeptide reads, in one-letter code: ATP synthase subunit a (271 aa).

5 helical membrane passes run 38–58, 100–120, 146–166, 220–240, and 242–262; these read FWTLNIDSMFFSVVLGLLFLA, LIAPLALTVFVWVFLMNLMDL, DVNITLSMALGVFILILFYSI, LIFILIAGLLPWWSQWILNVP, and AIFHILIITLQAFIFMVLTIV.

The protein belongs to the ATPase A chain family. As to quaternary structure, F-type ATPases have 2 components, CF(1) - the catalytic core - and CF(0) - the membrane proton channel. CF(1) has five subunits: alpha(3), beta(3), gamma(1), delta(1), epsilon(1). CF(0) has three main subunits: a(1), b(2) and c(9-12). The alpha and beta chains form an alternating ring which encloses part of the gamma chain. CF(1) is attached to CF(0) by a central stalk formed by the gamma and epsilon chains, while a peripheral stalk is formed by the delta and b chains.

Its subcellular location is the cell inner membrane. Key component of the proton channel; it plays a direct role in the translocation of protons across the membrane. This Enterobacter sp. (strain 638) protein is ATP synthase subunit a.